The sequence spans 233 residues: Large ribosomal subunit protein uL1 (233 aa).

The protein belongs to the universal ribosomal protein uL1 family. Part of the 50S ribosomal subunit.

Its function is as follows. Binds directly to 23S rRNA. The L1 stalk is quite mobile in the ribosome, and is involved in E site tRNA release. Protein L1 is also a translational repressor protein, it controls the translation of the L11 operon by binding to its mRNA. The chain is Large ribosomal subunit protein uL1 from Thermotoga maritima (strain ATCC 43589 / DSM 3109 / JCM 10099 / NBRC 100826 / MSB8).